The chain runs to 520 residues: MEFPEHSRHLLQCLSEQRHQGFLCDCTVLVGDAHFRAHRAVLASCSMYFHLFYKDQLDKRDIVHLNSDIVTAPAFALLLEFMYEGILQFKGLPIEDVLAAASYLHMYDIVKVCKKKLKEKATTDSTKKEEDTSSFSDKVECLSDGSSHMAGDLPSDEDDVEDEKINILPGKTDLATESRNMWIRLPTESASIPRTVGEAETHTTAAGKTAVSPCSSTGSLSHRSAISMGDSADVDCVLDLSVKSSLSGTETMNNSYLSSQEILRNSLVQVKVEKEATCDKNDIDTTEYDIERNTVKESVSSNIRASYEPVHLAPIREDSVLRELDHDDKASDDDMITLENERVQMEANTDNSLLPYVPNIISPTGQIFMCPLCNKVFPSPHILQIHLSTHFREQEGIRSKPANDVHVPTCSLCGKTFSCMYTLKRHERTHSGEKPYTCTQCGKSFQYSHNLSRHAVVHTREKPHACKWCERRFTQSGDLYRHIRKFHCELVNSLSVKSETLGLPAVRDWTLEDSSQELWK.

One can recognise a BTB domain in the interval Cys-24–Gly-91. The tract at residues Ala-121–Glu-140 is disordered. 4 C2H2-type zinc fingers span residues Phe-368–His-390, Pro-408–His-430, Tyr-436–His-458, and His-464–His-487.

It belongs to the krueppel C2H2-type zinc-finger protein family. ZBTB18 subfamily.

It is found in the nucleus. In terms of biological role, transcriptional repressor that plays a role in various developmental processes. Specifically binds the consensus DNA sequence 5'-[AC]ACATCTG[GT][AC]-3' which contains the E box core, and acts by recruiting chromatin remodeling multiprotein complexes. This Xenopus laevis (African clawed frog) protein is Zinc finger and BTB domain-containing protein 18 (zbtb18).